The chain runs to 248 residues: 14-3-3 protein zeta (248 aa).

Belongs to the 14-3-3 family. Homodimer; homodimerization is not essential for modulating the activity of Slo. Interacts with phosphorylated Slob; the interaction with Slob mediates an indirect interaction with Slo. Interacts with phosphorylated yki. Interacts with hemo; this represses 14-3-3zeta activity which prevents the 14-3-3zeta-mediated activation of phosphoinositide 3-kinase Pi3K68D. This, in turn, inhibits the Pi3K68D-mediated conversion of phosphatidylinositol to phosphatidylinositol-3-phosphate and prevents progression of early endosomes through the maturation process which regulates subsequent steps of phagocytic processing. Interacts with REPTOR (when phosphorylated), this interaction may assist the cytoplasmic retention of REPTOR. In terms of tissue distribution, predominantly expressed in the ventral nerve cord of the embryo, and in the neural tissues of the head. Also found in the region posterior to the morphogenetic furrow of the eye imaginal disk where cells differentiate as photoreceptors.

It localises to the cytoplasm. It is found in the early endosome. Functionally, required in Raf-dependent cell proliferation and photoreceptor differentiation during eye development. Acts upstream of Raf and downstream of Ras, and is essential for viability. Acts as a negative regulator of the slo calcium channel via its interaction with slo-binding protein slob. Inhibits yki activity by restricting its nuclear localization. Binds to and promotes the activity of phosphoinositide 3-kinase Pi3K68D which converts phosphatidylinositol to phosphatidylinositol-3-phosphate and promotes maturation of early endosomes. The sequence is that of 14-3-3 protein zeta (14-3-3zeta) from Drosophila melanogaster (Fruit fly).